We begin with the raw amino-acid sequence, 158 residues long: Transcription elongation factor GreA (158 aa).

Belongs to the GreA/GreB family.

Functionally, necessary for efficient RNA polymerase transcription elongation past template-encoded arresting sites. The arresting sites in DNA have the property of trapping a certain fraction of elongating RNA polymerases that pass through, resulting in locked ternary complexes. Cleavage of the nascent transcript by cleavage factors such as GreA or GreB allows the resumption of elongation from the new 3'terminus. GreA releases sequences of 2 to 3 nucleotides. This Methylobacterium sp. (strain 4-46) protein is Transcription elongation factor GreA.